The primary structure comprises 139 residues: ATP synthase epsilon chain (139 aa).

It belongs to the ATPase epsilon chain family. In terms of assembly, F-type ATPases have 2 components, CF(1) - the catalytic core - and CF(0) - the membrane proton channel. CF(1) has five subunits: alpha(3), beta(3), gamma(1), delta(1), epsilon(1). CF(0) has three main subunits: a, b and c.

Its subcellular location is the cell inner membrane. Its function is as follows. Produces ATP from ADP in the presence of a proton gradient across the membrane. The sequence is that of ATP synthase epsilon chain from Acinetobacter baumannii (strain SDF).